We begin with the raw amino-acid sequence, 722 residues long: Dipeptidyl aminopeptidase BII (722 aa).

The first 24 residues, 1-24, serve as a signal peptide directing secretion; it reads MRPNLLAAAIAVPLSLLAAQIAQA. Intrachain disulfides connect C70–C87 and C166–C174. H86 serves as the catalytic Charge relay system. 215-216 provides a ligand contact to substrate; that stretch reads NW. Residue D224 is the Charge relay system of the active site. Substrate contacts are provided by residues N330, 655-657, and 673-674; these read GNS and FD. S657 (charge relay system) is an active-site residue.

It belongs to the peptidase S46 family. As to quaternary structure, homodimer.

Completely inhibited by the serine protease inhibitor diisopropyl fluorophosphate (DFP) and potently inhibited by 0.5 mM ZnCl(2), 10 mM o-phenanthlorine, phenylmethanesulfonyl fluoride (PMSF) and N-tosyl-L-phenyl-alanyl chloromethyl ketone (TPCK), but not by N-tosyl-L-lysyl chloromethyl ketone (TLCK). Activity is not affected significantly by protease inhibitors, such as chymostatin, leupeptin, N-ethylmaleimide (NEM), iodoacetate (IAA), L-trans-epoxysuccinyl-leucylamido(4-guanido)butane (E64) and pepstatin A or by CoCl(2), CaCl(2) and EDTA. Exopeptidase that catalyzes the removal of dipeptide units (NH2-P2-P1-) from the free amino termini of oligopeptides and small proteins. Peptide digestion is sequential and substrate recognition is non-specific, with the exception that Pro is not suitable as a P1 residue. Removes many residues of bioactive oligopeptides such as angiotensin I and neuromedin N and also cleaves oxidized insulin B chain. Able to hydrolyze an X-Pro bond, an imido bond. No endopeptidase activity. May play a physiological role in feeding. In Pseudoxanthomonas mexicana, this protein is Dipeptidyl aminopeptidase BII.